Consider the following 405-residue polypeptide: Serine--glyoxylate aminotransferase (405 aa).

The residue at position 196 (K196) is an N6-(pyridoxal phosphate)lysine.

The protein belongs to the class-V pyridoxal-phosphate-dependent aminotransferase family. Pyridoxal 5'-phosphate serves as cofactor.

The enzyme catalyses glyoxylate + L-serine = 3-hydroxypyruvate + glycine. The protein operates within one-carbon metabolism; formaldehyde assimilation via serine pathway. This is Serine--glyoxylate aminotransferase (sgaA) from Hyphomicrobium methylovorum.